Here is a 349-residue protein sequence, read N- to C-terminus: Histidinol-phosphate aminotransferase (349 aa).

Lys-206 carries the post-translational modification N6-(pyridoxal phosphate)lysine.

The protein belongs to the class-II pyridoxal-phosphate-dependent aminotransferase family. Histidinol-phosphate aminotransferase subfamily. As to quaternary structure, homodimer. Pyridoxal 5'-phosphate serves as cofactor.

The enzyme catalyses L-histidinol phosphate + 2-oxoglutarate = 3-(imidazol-4-yl)-2-oxopropyl phosphate + L-glutamate. Its pathway is amino-acid biosynthesis; L-histidine biosynthesis; L-histidine from 5-phospho-alpha-D-ribose 1-diphosphate: step 7/9. This chain is Histidinol-phosphate aminotransferase, found in Streptococcus mutans serotype c (strain ATCC 700610 / UA159).